The primary structure comprises 720 residues: ATP-dependent DNA helicase Hel308 (720 aa).

ATP is bound by residues Ser-23, Gln-28, and 46-53; that span reads IPTASGKT. The 165-residue stretch at 33-197 folds into the Helicase ATP-binding domain; sequence KSGILEGKNA…WLNAELIVSD (165 aa). A DEAH box motif is present at residues 145–148; that stretch reads DEIH. Residues 229 to 422 form the Helicase C-terminal domain; it reads LVYDAIRKKK…NLRSQVLALI (194 aa).

It belongs to the helicase family. Hel308 subfamily. In terms of assembly, monomer. Interacts with PCNA. Mg(2+) is required as a cofactor. Zn(2+) serves as cofactor.

The catalysed reaction is Couples ATP hydrolysis with the unwinding of duplex DNA by translocating in the 3'-5' direction.. The enzyme catalyses ATP + H2O = ADP + phosphate + H(+). Its function is as follows. DNA-dependent ATPase and 3'-5' DNA helicase that may be involved in repair of stalled replication forks. Unwinds the lagging strand from forked DNA structures in a 3'-5' direction. PCNA, the DNA polymerase sliding clamp subunit, stimulates the helicase activity, and may alter substrate specificity. Unwinds branched DNA (Holliday junctions) in an ATP-dependent fashion; ss- and dsDNA stimulate ATPase to the greatest extent, although it preferentially binds DNA with a single-stranded region. Processes a RecA-mediated recombination intermediate between gapped circular and homologous linear dsDNA. The chain is ATP-dependent DNA helicase Hel308 from Pyrococcus furiosus (strain ATCC 43587 / DSM 3638 / JCM 8422 / Vc1).